We begin with the raw amino-acid sequence, 550 residues long: Glucose import ATP-binding protein TsgD13 (550 aa).

ABC transporter domains lie at 7–270 (LRME…VGRE) and 287–533 (LRAR…TGGG). 39 to 46 (GENGAGKS) contacts ATP. The tract at residues 529–550 (MTGGGDATATAGAQVRGLGGSS) is disordered.

Belongs to the ABC transporter superfamily. As to quaternary structure, the complex is composed of two ATP-binding proteins (TsgD13), two transmembrane proteins (TsgB13 and TsgC13) and a solute-binding protein (TsgA13).

The protein resides in the cell membrane. It catalyses the reaction D-glucose(out) + ATP + H2O = D-glucose(in) + ADP + phosphate + H(+). In terms of biological role, part of an ABC transporter complex involved in glucose import. Responsible for energy coupling to the transport system. The polypeptide is Glucose import ATP-binding protein TsgD13 (tsgD13) (Haloferax volcanii (strain ATCC 29605 / DSM 3757 / JCM 8879 / NBRC 14742 / NCIMB 2012 / VKM B-1768 / DS2) (Halobacterium volcanii)).